The chain runs to 266 residues: Glutamate racemase (266 aa).

Substrate-binding positions include 9–10 (DS) and 41–42 (YG). The active-site Proton donor/acceptor is C72. Residue 73–74 (NT) participates in substrate binding. C183 serves as the catalytic Proton donor/acceptor. Residue 184–185 (TH) coordinates substrate.

The protein belongs to the aspartate/glutamate racemases family.

The enzyme catalyses L-glutamate = D-glutamate. The protein operates within cell wall biogenesis; peptidoglycan biosynthesis. Provides the (R)-glutamate required for cell wall biosynthesis. In Listeria monocytogenes serotype 4a (strain HCC23), this protein is Glutamate racemase.